We begin with the raw amino-acid sequence, 178 residues long: Protein GrpE (178 aa).

A compositionally biased stretch (polar residues) spans 1 to 11 (MENTQENPTDQ). The tract at residues 1-31 (MENTQENPTDQTTEETGREAQAAENAAPAAE) is disordered. The segment covering 19-31 (EAQAAENAAPAAE) has biased composition (low complexity).

It belongs to the GrpE family. As to quaternary structure, homodimer.

It localises to the cytoplasm. Participates actively in the response to hyperosmotic and heat shock by preventing the aggregation of stress-denatured proteins, in association with DnaK and GrpE. It is the nucleotide exchange factor for DnaK and may function as a thermosensor. Unfolded proteins bind initially to DnaJ; upon interaction with the DnaJ-bound protein, DnaK hydrolyzes its bound ATP, resulting in the formation of a stable complex. GrpE releases ADP from DnaK; ATP binding to DnaK triggers the release of the substrate protein, thus completing the reaction cycle. Several rounds of ATP-dependent interactions between DnaJ, DnaK and GrpE are required for fully efficient folding. The chain is Protein GrpE from Burkholderia thailandensis (strain ATCC 700388 / DSM 13276 / CCUG 48851 / CIP 106301 / E264).